Here is a 283-residue protein sequence, read N- to C-terminus: MIVCTTISDLQAQLRIEREQKRSVGFVPTMGYLHEGHLSLVKRAKEEHDTVVMSIFVNPLQFGAGEDLDTYPRDFARDEQLAEAEGVDILFYPSTDEMYPRPASVRLKVTQGVDVLCGASRPGHFDGVVTVVLKLFHLVEPDAAYFGLKDAQQVAVITNMVEDLNVGVQIVPCATVREVDGLAKSSRNVRLSEKERKEAPGLYQSLLAGREALDAGEKDAAVIRERIRQSLEERLTGRIDYVEVLSYPRLQKIERIEETVILAVAYQFENARLIDNLIVPYGE.

Met-30–His-37 lines the ATP pocket. The active-site Proton donor is His-37. Residue Gln-61 coordinates (R)-pantoate. Gln-61 is a binding site for beta-alanine. Gly-147–Asp-150 is an ATP binding site. (R)-pantoate is bound at residue Gln-153. ATP-binding positions include Val-176 and Lys-184–Arg-187.

Belongs to the pantothenate synthetase family. Homodimer.

It localises to the cytoplasm. It catalyses the reaction (R)-pantoate + beta-alanine + ATP = (R)-pantothenate + AMP + diphosphate + H(+). Its pathway is cofactor biosynthesis; (R)-pantothenate biosynthesis; (R)-pantothenate from (R)-pantoate and beta-alanine: step 1/1. Functionally, catalyzes the condensation of pantoate with beta-alanine in an ATP-dependent reaction via a pantoyl-adenylate intermediate. This is Pantothenate synthetase from Halalkalibacterium halodurans (strain ATCC BAA-125 / DSM 18197 / FERM 7344 / JCM 9153 / C-125) (Bacillus halodurans).